Reading from the N-terminus, the 329-residue chain is 4-hydroxythreonine-4-phosphate dehydrogenase (329 aa).

Positions 136 and 137 each coordinate substrate. His166, His211, and His266 together coordinate a divalent metal cation. The substrate site is built by Lys274, Asn283, and Arg292.

It belongs to the PdxA family. In terms of assembly, homodimer. Zn(2+) is required as a cofactor. The cofactor is Mg(2+). Requires Co(2+) as cofactor.

The protein resides in the cytoplasm. The catalysed reaction is 4-(phosphooxy)-L-threonine + NAD(+) = 3-amino-2-oxopropyl phosphate + CO2 + NADH. The protein operates within cofactor biosynthesis; pyridoxine 5'-phosphate biosynthesis; pyridoxine 5'-phosphate from D-erythrose 4-phosphate: step 4/5. In terms of biological role, catalyzes the NAD(P)-dependent oxidation of 4-(phosphooxy)-L-threonine (HTP) into 2-amino-3-oxo-4-(phosphooxy)butyric acid which spontaneously decarboxylates to form 3-amino-2-oxopropyl phosphate (AHAP). This Escherichia coli O81 (strain ED1a) protein is 4-hydroxythreonine-4-phosphate dehydrogenase.